We begin with the raw amino-acid sequence, 886 residues long: Alanine--tRNA ligase (886 aa).

Residues H564, H568, C676, and H680 each coordinate Zn(2+).

This sequence belongs to the class-II aminoacyl-tRNA synthetase family. It depends on Zn(2+) as a cofactor.

It is found in the cytoplasm. It carries out the reaction tRNA(Ala) + L-alanine + ATP = L-alanyl-tRNA(Ala) + AMP + diphosphate. Catalyzes the attachment of alanine to tRNA(Ala) in a two-step reaction: alanine is first activated by ATP to form Ala-AMP and then transferred to the acceptor end of tRNA(Ala). Also edits incorrectly charged Ser-tRNA(Ala) and Gly-tRNA(Ala) via its editing domain. The protein is Alanine--tRNA ligase of Methylobacterium sp. (strain 4-46).